A 69-amino-acid polypeptide reads, in one-letter code: U2-agatoxin-Ao1g (69 aa).

The first 20 residues, 1–20 (MKAIISLLLISAMVFSMIEA), serve as a signal peptide directing secretion. Residues 21–34 (VPVEEGLQLFEGER) constitute a propeptide that is removed on maturation. Cystine bridges form between Cys36–Cys52, Cys43–Cys57, and Cys51–Cys67. Residue Leu68 is modified to Leucine amide.

The protein belongs to the neurotoxin 01 (U2-agtx) family. As to expression, expressed by the venom gland.

Its subcellular location is the secreted. Insect active toxin causing rapid but reversible paralysis in crickets. No activity shown in mammals. Does not show effect on mammalian voltage-gated calcium channels. The sequence is that of U2-agatoxin-Ao1g from Agelena orientalis (Funnel-web spider).